Here is a 634-residue protein sequence, read N- to C-terminus: Ankyrin repeat and SOCS box protein 2 (634 aa).

Positions 26–45 (SEEELVQMAIEQSLADKTRG) constitute a UIM domain. Residues 35-81 (IEQSLADKTRGPTPAETSVSSQTNHQPGHIHPWTRSSSPPESPPARA) are disordered. A compositionally biased stretch (polar residues) spans 49-60 (AETSVSSQTNHQ). ANK repeat units lie at residues 104 to 133 (AAMD…NLAE), 137 to 167 (EGWL…TIDQ), 171 to 200 (QEET…EPDI), 204 to 233 (SRET…DANH), 237 to 266 (RGWT…KVEA), 270 to 299 (YSIT…DINT), 303 to 332 (DSAS…DANK), 336 to 365 (DGLL…RTRV), 368 to 397 (SGIS…DVNT), 410 to 439 (RRTS…DPNR), 440 to 469 (DVIS…NIDA), and 476 to 504 (TAFP…DGEP). A Phosphoserine modification is found at serine 371. Residues 580–634 (EDWAVIKEKAEPPRPLAHLCRLRVRKAIGKYRIKLLDTLPLPGRLIRYLKYENTQ) enclose the SOCS box domain.

It belongs to the ankyrin SOCS box (ASB) family. As to quaternary structure, component of a probable ECS E3 ubiquitin-protein ligase complex which contains CUL5, either RBX1 or RNF7/RBX2, Elongin BC complex (ELOB and ELOC) and ASB2. Interacts with SKP2. Through its interaction with SKP2, likely to bridge the formation of dimeric E3-ubiquitin-protein ligase complexes composed of an ECS complex and an SCF(SKP2) complex. Interacts with JAK2; the interaction targets JAK2 for Notch-mediated proteasomal degradation. Interacts with TCF3/E2A; the interaction is mediated by SKP2 and targets TCF3 for Notch-mediated proteasomal degradation. Interacts with DES. Post-translationally, monoubiquitinated.

Its subcellular location is the cytoplasm. It is found in the cytoskeleton. The protein localises to the stress fiber. The protein resides in the myofibril. It localises to the sarcomere. Its subcellular location is the z line. Its pathway is protein modification; protein ubiquitination. Substrate-recognition component of a SCF-like ECS (Elongin-Cullin-SOCS-box protein) E3 ubiquitin-protein ligase complex which mediates the ubiquitination and subsequent proteasomal degradation of target proteins. Mediates Notch-induced ubiquitination and degradation of substrates including E2A and JAK2. Required during embryonic heart development for complete heart looping. Required for cardiomyocyte differentiation. Involved in myogenic differentiation and targets filamin FLNB for proteasomal degradation but not filamin FLNA. Also targets DES for proteasomal degradation. Acts as a negative regulator of skeletal muscle mass. The protein is Ankyrin repeat and SOCS box protein 2 of Rattus norvegicus (Rat).